A 359-amino-acid polypeptide reads, in one-letter code: MVGKIAPVAVDAMGGDHAPGAIVQGAINAARKGLPILLVGPEARLRDELARHRAGHALPIEVHHAGEVVEMDDHPGQAMRRKRDNSIRVCFELVKSGRASAMVSAGNSGAVMAGAIFVLGRPEGVERPAIISVLPALKGSSILLDMGAVVDCKPIHLVQFALMGEVYARRVVGVARPKVAILANGEEESKGTDLTRAAAAALRHAPLQFVGYCEGRDLLTGEVDVIVTDGFTGNVALKTMEGTAKVVGEYLKRALRSTAVSAIGGMLSKAALDGMKKRLDWREVGGAPLVGVNGVGFISHGRSDAIAIENAIHRARDAARAHFVDEIARAVAPSEALLEGAAGRAARPPPPRRASSHDA.

Residues 338–359 (LEGAAGRAARPPPPRRASSHDA) are disordered.

This sequence belongs to the PlsX family. In terms of assembly, homodimer. Probably interacts with PlsY.

Its subcellular location is the cytoplasm. The catalysed reaction is a fatty acyl-[ACP] + phosphate = an acyl phosphate + holo-[ACP]. Its pathway is lipid metabolism; phospholipid metabolism. Catalyzes the reversible formation of acyl-phosphate (acyl-PO(4)) from acyl-[acyl-carrier-protein] (acyl-ACP). This enzyme utilizes acyl-ACP as fatty acyl donor, but not acyl-CoA. This chain is Phosphate acyltransferase, found in Anaeromyxobacter sp. (strain Fw109-5).